Reading from the N-terminus, the 562-residue chain is Dihydroxy-acid dehydratase (562 aa).

Cys51 lines the [2Fe-2S] cluster pocket. Asp83 provides a ligand contact to Mg(2+). Residue Cys124 participates in [2Fe-2S] cluster binding. Residues Asp125 and Lys126 each contribute to the Mg(2+) site. Lys126 carries the post-translational modification N6-carboxylysine. Cys196 serves as a coordination point for [2Fe-2S] cluster. A Mg(2+)-binding site is contributed by Glu448. Ser474 acts as the Proton acceptor in catalysis.

It belongs to the IlvD/Edd family. As to quaternary structure, homodimer. [2Fe-2S] cluster is required as a cofactor. Mg(2+) serves as cofactor.

The enzyme catalyses (2R)-2,3-dihydroxy-3-methylbutanoate = 3-methyl-2-oxobutanoate + H2O. It carries out the reaction (2R,3R)-2,3-dihydroxy-3-methylpentanoate = (S)-3-methyl-2-oxopentanoate + H2O. It functions in the pathway amino-acid biosynthesis; L-isoleucine biosynthesis; L-isoleucine from 2-oxobutanoate: step 3/4. The protein operates within amino-acid biosynthesis; L-valine biosynthesis; L-valine from pyruvate: step 3/4. Functionally, functions in the biosynthesis of branched-chain amino acids. Catalyzes the dehydration of (2R,3R)-2,3-dihydroxy-3-methylpentanoate (2,3-dihydroxy-3-methylvalerate) into 2-oxo-3-methylpentanoate (2-oxo-3-methylvalerate) and of (2R)-2,3-dihydroxy-3-methylbutanoate (2,3-dihydroxyisovalerate) into 2-oxo-3-methylbutanoate (2-oxoisovalerate), the penultimate precursor to L-isoleucine and L-valine, respectively. This Pyrobaculum aerophilum (strain ATCC 51768 / DSM 7523 / JCM 9630 / CIP 104966 / NBRC 100827 / IM2) protein is Dihydroxy-acid dehydratase.